We begin with the raw amino-acid sequence, 255 residues long: tRNA-cytidine(32) 2-sulfurtransferase (255 aa).

A PP-loop motif motif is present at residues 37-42 (SGGKDS). C112, C115, and C202 together coordinate [4Fe-4S] cluster.

The protein belongs to the TtcA family. As to quaternary structure, homodimer. The cofactor is Mg(2+). [4Fe-4S] cluster serves as cofactor.

The protein localises to the cytoplasm. It catalyses the reaction cytidine(32) in tRNA + S-sulfanyl-L-cysteinyl-[cysteine desulfurase] + AH2 + ATP = 2-thiocytidine(32) in tRNA + L-cysteinyl-[cysteine desulfurase] + A + AMP + diphosphate + H(+). It functions in the pathway tRNA modification. Functionally, catalyzes the ATP-dependent 2-thiolation of cytidine in position 32 of tRNA, to form 2-thiocytidine (s(2)C32). The sulfur atoms are provided by the cysteine/cysteine desulfurase (IscS) system. The sequence is that of tRNA-cytidine(32) 2-sulfurtransferase from Citrifermentans bemidjiense (strain ATCC BAA-1014 / DSM 16622 / JCM 12645 / Bem) (Geobacter bemidjiensis).